Here is a 117-residue protein sequence, read N- to C-terminus: DNA-binding protein MK1619 (117 aa).

The protein belongs to the PDCD5 family.

The protein is DNA-binding protein MK1619 of Methanopyrus kandleri (strain AV19 / DSM 6324 / JCM 9639 / NBRC 100938).